Reading from the N-terminus, the 1046-residue chain is Toluene efflux pump membrane transporter TtgE (1046 aa).

12 consecutive transmembrane segments (helical) span residues 10-30 (IFAW…LTKM), 339-359 (SVVH…FLFL), 370-390 (LAVP…GISI), 392-412 (VLTM…AIVV), 440-460 (GALV…AFFG), 470-490 (FAVT…IFTP), 542-562 (LIFA…PKAF), 871-891 (APML…ALYE), 895-915 (VPMS…LATL), 927-947 (VGLM…IEFA), 973-993 (IIMT…ATGA), and 1008-1028 (GMIT…VVVV).

It belongs to the resistance-nodulation-cell division (RND) (TC 2.A.6) family.

Its subcellular location is the cell inner membrane. Functionally, the inner membrane transporter component of an inducible organic solvent efflux pump. Involved in export of toluene and styrene but not of m-xylene, propylbenzene or ethylbenzene. Is not involved in antibiotic or AMP efflux. This Pseudomonas putida (strain DOT-T1E) protein is Toluene efflux pump membrane transporter TtgE (ttgE).